The sequence spans 129 residues: Histone H2A.J (129 aa).

The disordered stretch occupies residues 1–22; that stretch reads MSGRGKQGGKVRAKAKSRSSRA. N6-acetyllysine occurs at positions 6 and 10. Basic residues predominate over residues 7-19; that stretch reads QGGKVRAKAKSRS. The residue at position 10 (lysine 10) is an N6-lactoyllysine; alternate. An N5-methylglutamine modification is found at glutamine 105. At threonine 121 the chain carries Phosphothreonine; by DCAF1.

Belongs to the histone H2A family. In terms of assembly, the nucleosome is a histone octamer containing two molecules each of H2A, H2B, H3 and H4 assembled in one H3-H4 heterotetramer and two H2A-H2B heterodimers. The octamer wraps approximately 147 bp of DNA. Post-translationally, monoubiquitination of Lys-120 (H2AXK119ub) gives a specific tag for epigenetic transcriptional repression. Following DNA double-strand breaks (DSBs), it is ubiquitinated through 'Lys-63' linkage of ubiquitin moieties. In terms of processing, glutamine methylation at Gln-105 (H2AQ104me) by FBL is specifically dedicated to polymerase I. It is present at 35S ribosomal DNA locus and impairs binding of the FACT complex. Phosphorylation on Ser-2 (H2AS1ph) is enhanced during mitosis. Phosphorylation on Ser-2 by RPS6KA5/MSK1 directly represses transcription. Acetylation of H3 inhibits Ser-2 phosphorylation by RPS6KA5/MSK1. Phosphorylation at Thr-121 (H2AT120ph) by DCAF1 is present in the regulatory region of many tumor suppresor genes and down-regulates their transcription.

The protein localises to the nucleus. The protein resides in the chromosome. Core component of nucleosome. Nucleosomes wrap and compact DNA into chromatin, limiting DNA accessibility to the cellular machineries which require DNA as a template. Histones thereby play a central role in transcription regulation, DNA repair, DNA replication and chromosomal stability. DNA accessibility is regulated via a complex set of post-translational modifications of histones, also called histone code, and nucleosome remodeling. This is Histone H2A.J from Macaca fascicularis (Crab-eating macaque).